A 356-amino-acid chain; its full sequence is Protein-glutamate methylesterase/protein-glutamine glutaminase 4 (356 aa).

Positions 15-132 (RVLVVDDSAV…SVGEMTADLV (118 aa)) constitute a Response regulatory domain. Asp66 bears the 4-aspartylphosphate mark. A CheB-type methylesterase domain is found at 162–348 (ARTTLQVVAI…PLDRIAPEIL (187 aa)). Active-site residues include Ser174, His200, and Asp296.

Belongs to the CheB family. Post-translationally, phosphorylated by CheA. Phosphorylation of the N-terminal regulatory domain activates the methylesterase activity.

It is found in the cytoplasm. The enzyme catalyses [protein]-L-glutamate 5-O-methyl ester + H2O = L-glutamyl-[protein] + methanol + H(+). It catalyses the reaction L-glutaminyl-[protein] + H2O = L-glutamyl-[protein] + NH4(+). Its function is as follows. Involved in chemotaxis. Part of a chemotaxis signal transduction system that modulates chemotaxis in response to various stimuli. Catalyzes the demethylation of specific methylglutamate residues introduced into the chemoreceptors (methyl-accepting chemotaxis proteins or MCP) by CheR. Also mediates the irreversible deamidation of specific glutamine residues to glutamic acid. This is Protein-glutamate methylesterase/protein-glutamine glutaminase 4 from Anaeromyxobacter dehalogenans (strain 2CP-C).